The primary structure comprises 382 residues: Lipid-A-disaccharide synthase (382 aa).

This sequence belongs to the LpxB family.

The catalysed reaction is 2-N,3-O-bis[(3R)-3-hydroxytetradecanoyl]-alpha-D-glucosaminyl 1-phosphate + UDP-2-N,3-O-bis[(3R)-3-hydroxytetradecanoyl]-alpha-D-glucosamine = lipid A disaccharide (E. coli) + UDP + H(+). The enzyme catalyses a lipid X + a UDP-2-N,3-O-bis[(3R)-3-hydroxyacyl]-alpha-D-glucosamine = a lipid A disaccharide + UDP + H(+). The protein operates within glycolipid biosynthesis; lipid IV(A) biosynthesis; lipid IV(A) from (3R)-3-hydroxytetradecanoyl-[acyl-carrier-protein] and UDP-N-acetyl-alpha-D-glucosamine: step 5/6. Its function is as follows. Condensation of UDP-2,3-diacylglucosamine and 2,3-diacylglucosamine-1-phosphate to form lipid A disaccharide, a precursor of lipid A, a phosphorylated glycolipid that anchors the lipopolysaccharide to the outer membrane of the cell. The sequence is that of Lipid-A-disaccharide synthase from Escherichia coli O8 (strain IAI1).